The following is a 408-amino-acid chain: Imidazolonepropionase (408 aa).

2 residues coordinate Fe(3+): His-73 and His-75. 2 residues coordinate Zn(2+): His-73 and His-75. Residues Arg-82, Tyr-145, and His-178 each contribute to the 4-imidazolone-5-propanoate site. Tyr-145 contributes to the N-formimidoyl-L-glutamate binding site. Residue His-243 participates in Fe(3+) binding. Residue His-243 coordinates Zn(2+). 4-imidazolone-5-propanoate is bound at residue Gln-246. Asp-318 lines the Fe(3+) pocket. Asp-318 provides a ligand contact to Zn(2+). 2 residues coordinate N-formimidoyl-L-glutamate: Asn-320 and Gly-322. A 4-imidazolone-5-propanoate-binding site is contributed by Ser-323.

It belongs to the metallo-dependent hydrolases superfamily. HutI family. Zn(2+) serves as cofactor. The cofactor is Fe(3+).

It localises to the cytoplasm. It carries out the reaction 4-imidazolone-5-propanoate + H2O = N-formimidoyl-L-glutamate. It participates in amino-acid degradation; L-histidine degradation into L-glutamate; N-formimidoyl-L-glutamate from L-histidine: step 3/3. Its function is as follows. Catalyzes the hydrolytic cleavage of the carbon-nitrogen bond in imidazolone-5-propanoate to yield N-formimidoyl-L-glutamate. It is the third step in the universal histidine degradation pathway. In Shewanella baltica (strain OS185), this protein is Imidazolonepropionase.